We begin with the raw amino-acid sequence, 452 residues long: uncharacterized protein (452 aa).

7 helical membrane-spanning segments follow: residues 18-38, 81-101, 269-289, 317-337, 354-374, 390-410, and 428-448; these read PIIESDLEVIVIALGGYVLAK, LLPVFYVIISAASILISFLLA, IVLLLDFFSPPLYSLFIALFI, AGQVAVPMILVVLGASLATDI, VIIVCLLGRMVVVPLALLPAF, VFVVVIFLLVGSPTAIQLTQI, and SYAVFTPPNSLLLAFASLLVV.

This sequence belongs to the auxin efflux carrier (TC 2.A.69) family.

It is found in the membrane. This is an uncharacterized protein from Schizosaccharomyces pombe (strain 972 / ATCC 24843) (Fission yeast).